Here is a 316-residue protein sequence, read N- to C-terminus: Pantothenate kinase (316 aa).

Residue G95–S102 coordinates ATP.

The protein belongs to the prokaryotic pantothenate kinase family.

It is found in the cytoplasm. The enzyme catalyses (R)-pantothenate + ATP = (R)-4'-phosphopantothenate + ADP + H(+). The protein operates within cofactor biosynthesis; coenzyme A biosynthesis; CoA from (R)-pantothenate: step 1/5. The sequence is that of Pantothenate kinase from Shewanella oneidensis (strain ATCC 700550 / JCM 31522 / CIP 106686 / LMG 19005 / NCIMB 14063 / MR-1).